A 609-amino-acid chain; its full sequence is Alpha-glycerophosphate oxidase (609 aa).

Residue 21–49 coordinates FAD; the sequence is DLLVIGGGITGAGLTLQAAAAGMKVAVLE.

The protein belongs to the FAD-dependent glycerol-3-phosphate dehydrogenase family. Requires FAD as cofactor.

It is found in the cytoplasm. The enzyme catalyses sn-glycerol 3-phosphate + O2 = dihydroxyacetone phosphate + H2O2. In Lactococcus lactis subsp. lactis (strain IL1403) (Streptococcus lactis), this protein is Alpha-glycerophosphate oxidase (glpO).